We begin with the raw amino-acid sequence, 203 residues long: MDPVIIGVGGPVGAGKTQLVERLTRAMSHEISMAAITNDIYTIEDAKILARTSVLPEERIIGLETGGCPHTAIREDTSMNEAAIEQLKKRFPDLQVIFVESGGDNLSATFSPELVDFSIYVIDVAQGEKIPRKAGQGMIKSDLFVINKTDLAPHVGADLGVMEEDSRVFRKDKPFAFTNLKTDEGLERVQEWIRTDVLMLDLA.

GTP is bound at residue 10 to 17; sequence GPVGAGKT.

Belongs to the SIMIBI class G3E GTPase family. UreG subfamily. Homodimer. UreD, UreF and UreG form a complex that acts as a GTP-hydrolysis-dependent molecular chaperone, activating the urease apoprotein by helping to assemble the nickel containing metallocenter of UreC. The UreE protein probably delivers the nickel.

It is found in the cytoplasm. Its function is as follows. Facilitates the functional incorporation of the urease nickel metallocenter. This process requires GTP hydrolysis, probably effectuated by UreG. This Kocuria rhizophila (strain ATCC 9341 / DSM 348 / NBRC 103217 / DC2201) protein is Urease accessory protein UreG.